Reading from the N-terminus, the 153-residue chain is 3-hydroxyacyl-[acyl-carrier-protein] dehydratase FabZ (153 aa).

Residue His-58 is part of the active site.

This sequence belongs to the thioester dehydratase family. FabZ subfamily.

The protein resides in the cytoplasm. It catalyses the reaction a (3R)-hydroxyacyl-[ACP] = a (2E)-enoyl-[ACP] + H2O. In terms of biological role, involved in unsaturated fatty acids biosynthesis. Catalyzes the dehydration of short chain beta-hydroxyacyl-ACPs and long chain saturated and unsaturated beta-hydroxyacyl-ACPs. This Bradyrhizobium diazoefficiens (strain JCM 10833 / BCRC 13528 / IAM 13628 / NBRC 14792 / USDA 110) protein is 3-hydroxyacyl-[acyl-carrier-protein] dehydratase FabZ.